The primary structure comprises 525 residues: Alcohol O-acetyltransferase 1 (525 aa).

A membrane association region spans residues 24–41 (GHARRMGSVEDLYVALNR). Catalysis depends on charge relay system residues His-191 and Asp-195. Positions 508–525 (QESLEELCSIYKALLLGP) are membrane association.

The protein belongs to the ATF1 alcohol acetyltransferase family.

The protein resides in the lipid droplet. The protein localises to the endoplasmic reticulum membrane. It catalyses the reaction an aliphatic alcohol + acetyl-CoA = an acetyl ester + CoA. The catalysed reaction is a fatty acyl-CoA + H2O = a fatty acid + CoA + H(+). The enzyme catalyses 3-methylbutanol + acetyl-CoA = 3-methylbutyl acetate + CoA. With respect to regulation, found to be inhibited by cadmium, copper, zinc and mercurium divalent cations and sulfhydryl reagents. Inhibited by the addition of unsaturated fatty acids to the culture. Major alcohol O-acetyltransferase that uses acetyl-CoA to synthesize acetate esters from various alcohols, producing ethyl acetate, isoamyl acetate, isobutyl acetate, butyl acetate, hexyl acetate, heptyl acetate and octyl acetate. The alcohol acyltransferase activity is promiscuous with regard to alcohol but relatively specific for acetyl-CoA since ATF1 does not use any other acyl-CoAs (C3, C4, C5, C6, C8, C10, C12). Acts also as an efficient thioesterase in vitro with specificity towards medium-chain-length acyl-CoAs. In natural environments, the production of aromatic volatile metabolites promotes dispersal through insect vectors. This is Alcohol O-acetyltransferase 1 from Saccharomyces cerevisiae (strain ATCC 204508 / S288c) (Baker's yeast).